We begin with the raw amino-acid sequence, 571 residues long: MREYVLIFLVAPVFAAILGPYDIPPELPPLNDENFFDRSHSEYETVLTPEDFELGTRITAAMAHDNGDDIWDSDAMYSKDRFEGDIANDNLNASTAELFANGGSGKSEDGKWYNAIKNRLQLWPEGRIPYTISSQYSSYSRSLIAASMQEYASHTCIRWVPKEAADVNYVHIYPDRGCYSMVGKMGGKQSLSLGSGCIQKGIILHELMHAVGFFHEQSRTDRDDHITIMWNNIQAGMQGQFEKYGHGTIQSLGTGYDYGSIMHYGTKAFSRNGQPTMIPKKNGATIGQRNGFSKVDKFKINTLYGCPVEGEKPTTSAPTSGPIVITVKPVVITTGKPPVIQTVSPAVPLKPSECRNLRGDCDDLAKQGWCIRNPGWMRANCPISCGMCIPTKETQKPYVQTTTQAATTTARPQKPVTQPIQPLPPVPPLPPTTPEDCEDLRVDCLVLVSQRYCKISQNFMKSYCAKSCGFCFKPPPTEIPDNRPTVVTTRPLVTLPPAVIRSRSPAPPVSTTTKAAPTTSTTSAAPYSPTPLPSECSDRKHFCSHWKSAGFCEGIFMNYMKKNCPASCGLC.

Positions 1–15 (MREYVLIFLVAPVFA) are cleaved as a signal peptide. An N-linked (GlcNAc...) asparagine glycan is attached at Asn-92. One can recognise a Peptidase M12A domain in the interval 114 to 307 (NAIKNRLQLW…FKINTLYGCP (194 aa)). 5 cysteine pairs are disulfide-bonded: Cys-156–Cys-306, Cys-178–Cys-197, Cys-354–Cys-388, Cys-361–Cys-381, and Cys-370–Cys-385. His-205 provides a ligand contact to Zn(2+). Glu-206 is a catalytic residue. His-209 and His-215 together coordinate Zn(2+). The region spanning 354–388 (CRNLRGDCDDLAKQGWCIRNPGWMRANCPISCGMC) is the ShKT 1 domain. Residues 407–420 (TTTARPQKPVTQPI) are compositionally biased toward low complexity. The disordered stretch occupies residues 407-426 (TTTARPQKPVTQPIQPLPPV). 3 disulfide bridges follow: Cys-437–Cys-471, Cys-444–Cys-464, and Cys-453–Cys-468. Residues 437-471 (CEDLRVDCLVLVSQRYCKISQNFMKSYCAKSCGFC) enclose the ShKT 2 domain. A disordered region spans residues 500 to 530 (IRSRSPAPPVSTTTKAAPTTSTTSAAPYSPT). A compositionally biased stretch (low complexity) spans 509–527 (VSTTTKAAPTTSTTSAAPY). Intrachain disulfides connect Cys-536/Cys-571, Cys-543/Cys-564, and Cys-552/Cys-568. The region spanning 536-571 (CSDRKHFCSHWKSAGFCEGIFMNYMKKNCPASCGLC) is the ShKT 3 domain.

The cofactor is Zn(2+). Expressed in pharyngeal marginal cells and muscles.

Its subcellular location is the secreted. Its function is as follows. Metalloprotease. This is Zinc metalloproteinase nas-15 (nas-15) from Caenorhabditis elegans.